The primary structure comprises 138 residues: Large ribosomal subunit protein uL16 (138 aa).

Positions 1–29 are disordered; the sequence is MSLLQPRKVKWRKPQKGRTKGKATRRNQV. Positions 7-25 are enriched in basic residues; the sequence is RKVKWRKPQKGRTKGKATR.

This sequence belongs to the universal ribosomal protein uL16 family. In terms of assembly, part of the 50S ribosomal subunit.

In terms of biological role, binds 23S rRNA and is also seen to make contacts with the A and possibly P site tRNAs. The polypeptide is Large ribosomal subunit protein uL16 (Sulfurihydrogenibium sp. (strain YO3AOP1)).